Consider the following 124-residue polypeptide: Holo-[acyl-carrier-protein] synthase (124 aa).

Positions 8 and 56 each coordinate Mg(2+).

It belongs to the P-Pant transferase superfamily. AcpS family. Mg(2+) is required as a cofactor.

The protein localises to the cytoplasm. The enzyme catalyses apo-[ACP] + CoA = holo-[ACP] + adenosine 3',5'-bisphosphate + H(+). Transfers the 4'-phosphopantetheine moiety from coenzyme A to a Ser of acyl-carrier-protein. The protein is Holo-[acyl-carrier-protein] synthase of Nitratidesulfovibrio vulgaris (strain ATCC 29579 / DSM 644 / CCUG 34227 / NCIMB 8303 / VKM B-1760 / Hildenborough) (Desulfovibrio vulgaris).